The sequence spans 506 residues: MASKYGSGVLPENKKEKGDKETPETSYSSQSVSVNTLADQVSSTLSFAPSSDSKTGGEVKFNEKSDQSGKSNTCRPSTSSDISDESTCSSFSGNNKPHKANDVRWEAIQAVRTKHGVLGLNHFRLLKRLGCGDIGTVHLAELHGTRCFFAMKVMDKGALASRKKLLRAQTEREILQCLDHPFLPTLYSHFETEKFSCLVMEFCPGGDLHTLRQRQPGKRFSEQAAKFYVAEVLLAMEYLHMLGIIYRDLKPENVLVRDDGHVMLSDFDLSLRCTVSPTVVRSTVLASEGQKNSGYCAQPACIQQPSCISAPTTCFSPRYFSSKSKKDKKMKNETGNQVSPLPELVAEPTSARSMSFVGTHEYLAPEIIKGEGHGSAVDWWTFGIFLYELLFGKTPFKGSGNRATLFNVVGQPLRFPESPVVSFAARDLIRSLLVKEPQHRLAYKRGATEMKQHPFFEGVNWALVRCASPPEIPKPVDYESAPATPAAATSTSVKSDQSNYLEFDFF.

Residues 1–96 are disordered; the sequence is MASKYGSGVL…TCSSFSGNNK (96 aa). Residues 12–23 show a composition bias toward basic and acidic residues; the sequence is ENKKEKGDKETP. Positions 24–54 are enriched in polar residues; the sequence is ETSYSSQSVSVNTLADQVSSTLSFAPSSDSK. Positions 55 to 67 are enriched in basic and acidic residues; it reads TGGEVKFNEKSDQ. Residues 77-92 show a composition bias toward low complexity; the sequence is STSSDISDESTCSSFS. A Protein kinase domain is found at 123–456; it reads FRLLKRLGCG…ATEMKQHPFF (334 aa). Residues 129 to 137 and K152 each bind ATP; that span reads LGCGDIGTV. D248 functions as the Proton acceptor in the catalytic mechanism. Positions 475–495 are disordered; that stretch reads PVDYESAPATPAAATSTSVKS. Over residues 480–492 the composition is skewed to low complexity; that stretch reads SAPATPAAATSTS.

The protein belongs to the protein kinase superfamily. AGC Ser/Thr protein kinase family.

It localises to the cell membrane. It catalyses the reaction L-seryl-[protein] + ATP = O-phospho-L-seryl-[protein] + ADP + H(+). The catalysed reaction is L-threonyl-[protein] + ATP = O-phospho-L-threonyl-[protein] + ADP + H(+). Its function is as follows. Protein kinase that regulates the auxin transport activity of PIN auxin efflux facilitators by direct phosphorylation. D6PK-mediated PIN phosphorylation promotes auxin transport in the hypocotyl and this is a prerequisite for PHOT1-dependent hypocotyl bending. The sequence is that of Serine/threonine-protein kinase D6PKL1 (D6PKL1) from Arabidopsis thaliana (Mouse-ear cress).